Here is a 207-residue protein sequence, read N- to C-terminus: Dephospho-CoA kinase (207 aa).

The 198-residue stretch at Thr10–Ser207 folds into the DPCK domain. Gly18–Ala23 lines the ATP pocket.

It belongs to the CoaE family.

It is found in the cytoplasm. It catalyses the reaction 3'-dephospho-CoA + ATP = ADP + CoA + H(+). It functions in the pathway cofactor biosynthesis; coenzyme A biosynthesis; CoA from (R)-pantothenate: step 5/5. Functionally, catalyzes the phosphorylation of the 3'-hydroxyl group of dephosphocoenzyme A to form coenzyme A. This chain is Dephospho-CoA kinase, found in Pseudomonas fluorescens (strain ATCC BAA-477 / NRRL B-23932 / Pf-5).